A 540-amino-acid polypeptide reads, in one-letter code: Glucose-6-phosphate isomerase (540 aa).

E350 (proton donor) is an active-site residue. Catalysis depends on residues H381 and K503.

It belongs to the GPI family.

It localises to the cytoplasm. It carries out the reaction alpha-D-glucose 6-phosphate = beta-D-fructose 6-phosphate. The protein operates within carbohydrate biosynthesis; gluconeogenesis. It functions in the pathway carbohydrate degradation; glycolysis; D-glyceraldehyde 3-phosphate and glycerone phosphate from D-glucose: step 2/4. Its function is as follows. Catalyzes the reversible isomerization of glucose-6-phosphate to fructose-6-phosphate. The sequence is that of Glucose-6-phosphate isomerase from Burkholderia pseudomallei (strain 1710b).